The primary structure comprises 235 residues: 7-cyano-7-deazaguanine synthase (235 aa).

13–23 contacts ATP; the sequence is FSGGLDSTTCL. Zn(2+) contacts are provided by C197, C207, C210, and C213.

This sequence belongs to the QueC family. It depends on Zn(2+) as a cofactor.

It carries out the reaction 7-carboxy-7-deazaguanine + NH4(+) + ATP = 7-cyano-7-deazaguanine + ADP + phosphate + H2O + H(+). The protein operates within purine metabolism; 7-cyano-7-deazaguanine biosynthesis. In terms of biological role, catalyzes the ATP-dependent conversion of 7-carboxy-7-deazaguanine (CDG) to 7-cyano-7-deazaguanine (preQ(0)). The protein is 7-cyano-7-deazaguanine synthase of Solidesulfovibrio magneticus (strain ATCC 700980 / DSM 13731 / RS-1) (Desulfovibrio magneticus).